A 100-amino-acid polypeptide reads, in one-letter code: MQFYTIVSLFLAGTAYALPATSANGYEACPSGGLFGNPQCCSLNLVGVLSGDCRAPTKTPNSAKEFQAICAESGQKARCCGLSEILELGAFCQKPVGVSA.

An N-terminal signal peptide occupies residues 1–17; sequence MQFYTIVSLFLAGTAYA. 4 cysteine pairs are disulfide-bonded: Cys29/Cys79, Cys40/Cys70, Cys41/Cys53, and Cys80/Cys92.

It belongs to the cerato-ulmin hydrophobin family. As to quaternary structure, homodimer. Homodimers further self-assemble to form highly ordered films at water-air interfaces through intermolecular interactions.

The protein localises to the secreted. It localises to the cell wall. Its function is as follows. Aerial growth, conidiation, and dispersal of filamentous fungi in the environment rely upon a capability of their secreting small amphipathic proteins called hydrophobins (HPBs) with low sequence identity. Class I can self-assemble into an outermost layer of rodlet bundles on aerial cell surfaces, conferring cellular hydrophobicity that supports fungal growth, development and dispersal; whereas Class II form highly ordered films at water-air interfaces through intermolecular interactions but contribute nothing to the rodlet structure. FOXG_02746 is a class II hydrophobin that is likely required for plant colonization. The polypeptide is Class II hydrophobin FOXG_02746 (Fusarium oxysporum f. sp. lycopersici (strain 4287 / CBS 123668 / FGSC 9935 / NRRL 34936) (Fusarium vascular wilt of tomato)).